Reading from the N-terminus, the 2410-residue chain is Coprinoferrin synthetase (2410 aa).

An adenylation 1 region spans residues 237–646 (LERRAKTNPH…GRIDTQIKVR (410 aa)). The Carrier 1 domain occupies 783 to 860 (RDCTPLEAEV…DIAQLVHVST (78 aa)). S820 carries the O-(pantetheine 4'-phosphoryl)serine modification. The tract at residues 891-1260 (DILPPFPVQE…SVEAVVNVHD (370 aa)) is condensation 1. The segment at 1298-1317 (ELPLPSRRSPEPVRKVNDDE) is disordered. Residues 1305–1314 (RSPEPVRKVN) show a composition bias toward basic and acidic residues. One can recognise a Carrier 2 domain in the interval 1324 to 1400 (LLDPVVVADL…RLARVVSNNK (77 aa)). S1361 carries the post-translational modification O-(pantetheine 4'-phosphoryl)serine. Positions 1436 to 1839 (IIPSTALQSG…RIGRTFSVPS (404 aa)) are condensation 2. Residues 1858 to 1932 (VQAGIIHPVL…DLVLQATEIK (75 aa)) form the Carrier 3 domain. An O-(pantetheine 4'-phosphoryl)serine modification is found at S1893. Residues 1992 to 2315 (FQYLFTFKLP…TPIFNVNVNV (324 aa)) are condensation 3.

The protein belongs to the NRP synthetase family.

It functions in the pathway siderophore biosynthesis. Nonribosomal peptide synthase; part of the gene cluster that mediates the biosynthesis of coprinoferrin, an acylated tripeptide hydroxamate siderophore. The biosynthesis of coprinoferrin depends on the hydroxylation of ornithine to N(5)-hydroxyornithine, catalyzed by the monooxygenase cpf2. The second step, the acylation of N(5)-hydroxy-L-ornithine to yield N(5)-hexanoyl-N(5)-hydroxyl-L-ornithine is catalyzed by a not yet identified acyltransferase. Finally, assembly of coprinoferrin is catalyzed by the nonribosomal peptide synthase (NRPS) cpf1 via amide bond formation between three N(5)-hexanoyl-N(5)-hydroxyl-L-ornithine molecules to release the linear trimer. Interestingly, proteins seemingly not directly related to biosynthesis, such as transcription factors, replication factors, and autophagy-related proteins, are conserved among the clusters homologous to the coprinoferrin cluster, suggesting that the cluster may also play developmental and cell biological functions. The protein is Coprinoferrin synthetase of Coprinopsis cinerea (strain Okayama-7 / 130 / ATCC MYA-4618 / FGSC 9003) (Inky cap fungus).